Here is a 989-residue protein sequence, read N- to C-terminus: Protease PrtH (989 aa).

2 repeats span residues 270 to 323 (TPTD…KCVN) and 528 to 581 (SPAS…VCVD). A disordered region spans residues 969–989 (PRDTPWRYGKRELPPSASGMR).

The protein belongs to the peptidase C25 family.

The protein resides in the cytoplasmic vesicle. Cleaves human complement component C3. May enable P.gingivalis to evade complement-mediated killing during the immune response. Plays an important role in soft tissue infections and is a virulence factor. The polypeptide is Protease PrtH (prtH) (Porphyromonas gingivalis (strain ATCC BAA-308 / W83)).